Consider the following 765-residue polypeptide: Cyanobacterial phytochrome A (765 aa).

The segment at 20-510 (IHLSGQIQPH…RKAIVNIVLR (491 aa)) is chromophore binding domain. Residues 152–320 (NLRDFCQIIV…VIFAEISARE (169 aa)) enclose the GAF domain. Cys259 contributes to the a tetrapyrrole binding site. The 214-residue stretch at 535-748 (VASHDLQEPL…TFYFTIPVGG (214 aa)) folds into the Histidine kinase domain. A Phosphohistidine; by autocatalysis modification is found at His538.

This sequence in the N-terminal section; belongs to the phytochrome family. Post-translationally, contains one covalently linked tetrapyrrole chromophore.

The enzyme catalyses ATP + protein L-histidine = ADP + protein N-phospho-L-histidine.. Photoreceptor which exists in two forms that are reversibly interconvertible by light: the R form that absorbs maximally in the red region of the spectrum and the FR form that absorbs maximally in the far-red region. This chain is Cyanobacterial phytochrome A (aphA), found in Nostoc sp. (strain PCC 7120 / SAG 25.82 / UTEX 2576).